A 155-amino-acid chain; its full sequence is Effector protein PevD1 (155 aa).

The signal sequence occupies residues 1–18; it reads MQFTLAAAAALFGASALA. Positions 33–148 constitute an AA1-like domain; that stretch reads NMYENIDIAD…NPTTIVIDSL (116 aa). Cystine bridges form between cysteine 70/cysteine 84 and cysteine 125/cysteine 135.

Monomer. Interacts with Arabidopsis thaliana NRP.

It localises to the secreted. In terms of biological role, effector protein. Elicits a hypersensitive response (HR) in tobacco plants (N.tabacum) and cotton (G.hirsutum). Boosts systemic acquired resistance (SAR) to tobacco mosaic virus (TMV) infection in N.tabacum and to V.dhaliae infection in primed cotton seedlings. This chain is Effector protein PevD1, found in Verticillium dahliae (Verticillium wilt).